Reading from the N-terminus, the 488-residue chain is Cobyric acid synthase (488 aa).

Residues 248 to 441 (VLRVVVPALP…VHGLFDTPAA (194 aa)) form the GATase cobBQ-type domain. The active-site Nucleophile is the Cys-328. His-433 is an active-site residue.

This sequence belongs to the CobB/CobQ family. CobQ subfamily.

It functions in the pathway cofactor biosynthesis; adenosylcobalamin biosynthesis. Its function is as follows. Catalyzes amidations at positions B, D, E, and G on adenosylcobyrinic A,C-diamide. NH(2) groups are provided by glutamine, and one molecule of ATP is hydrogenolyzed for each amidation. The sequence is that of Cobyric acid synthase from Burkholderia vietnamiensis (strain G4 / LMG 22486) (Burkholderia cepacia (strain R1808)).